The chain runs to 155 residues: Ribosome maturation factor RimP (155 aa).

This sequence belongs to the RimP family.

The protein resides in the cytoplasm. In terms of biological role, required for maturation of 30S ribosomal subunits. This chain is Ribosome maturation factor RimP, found in Bacteroides thetaiotaomicron (strain ATCC 29148 / DSM 2079 / JCM 5827 / CCUG 10774 / NCTC 10582 / VPI-5482 / E50).